We begin with the raw amino-acid sequence, 193 residues long: Holliday junction branch migration complex subunit RuvA (193 aa).

The domain I stretch occupies residues 1 to 64; the sequence is MIGRIAGTLI…EDAHLLYGFG (64 aa). A domain II region spans residues 65-143; sequence TAAERETFRQ…ADLGTVPGGP (79 aa). The tract at residues 144–151 is flexible linker; sequence AVSDDAVD. Positions 151 to 193 are domain III; it reads DVLNALLALGYSDKEAALAIKQVPAGTGVSEGIKLALKALSKG.

The protein belongs to the RuvA family. Homotetramer. Forms an RuvA(8)-RuvB(12)-Holliday junction (HJ) complex. HJ DNA is sandwiched between 2 RuvA tetramers; dsDNA enters through RuvA and exits via RuvB. An RuvB hexamer assembles on each DNA strand where it exits the tetramer. Each RuvB hexamer is contacted by two RuvA subunits (via domain III) on 2 adjacent RuvB subunits; this complex drives branch migration. In the full resolvosome a probable DNA-RuvA(4)-RuvB(12)-RuvC(2) complex forms which resolves the HJ.

The protein localises to the cytoplasm. Its function is as follows. The RuvA-RuvB-RuvC complex processes Holliday junction (HJ) DNA during genetic recombination and DNA repair, while the RuvA-RuvB complex plays an important role in the rescue of blocked DNA replication forks via replication fork reversal (RFR). RuvA specifically binds to HJ cruciform DNA, conferring on it an open structure. The RuvB hexamer acts as an ATP-dependent pump, pulling dsDNA into and through the RuvAB complex. HJ branch migration allows RuvC to scan DNA until it finds its consensus sequence, where it cleaves and resolves the cruciform DNA. The sequence is that of Holliday junction branch migration complex subunit RuvA from Ralstonia pickettii (strain 12J).